The sequence spans 353 residues: S-adenosylmethionine:tRNA ribosyltransferase-isomerase (353 aa).

Belongs to the QueA family. As to quaternary structure, monomer.

Its subcellular location is the cytoplasm. It carries out the reaction 7-aminomethyl-7-carbaguanosine(34) in tRNA + S-adenosyl-L-methionine = epoxyqueuosine(34) in tRNA + adenine + L-methionine + 2 H(+). Its pathway is tRNA modification; tRNA-queuosine biosynthesis. In terms of biological role, transfers and isomerizes the ribose moiety from AdoMet to the 7-aminomethyl group of 7-deazaguanine (preQ1-tRNA) to give epoxyqueuosine (oQ-tRNA). The chain is S-adenosylmethionine:tRNA ribosyltransferase-isomerase from Maricaulis maris (strain MCS10) (Caulobacter maris).